The sequence spans 950 residues: Lon protease homolog, mitochondrial (950 aa).

A mitochondrion-targeting transit peptide spans 1–65 (MAASTGYVRL…VPMGGGQWRG (65 aa)). 2 disordered regions span residues 67–94 (WDAG…SGEG) and 212–243 (PEGL…LGAK). The Lon N-terminal domain occupies 112 to 360 (LPLIAISRNP…KALSLLKKEF (249 aa)). The segment covering 224–233 (KSRRKLKRGK) has biased composition (basic residues). 513–520 (GPPGVGKT) contributes to the ATP binding site. One can recognise a Lon proteolytic domain in the interval 749–939 (VTPPGVVMGL…RDIFRIAFPL (191 aa)). Residues Ser-845 and Lys-888 contribute to the active site.

It belongs to the peptidase S16 family. Homohexamer. Organized in a ring with a central cavity. The ATP-binding and proteolytic domains (AP-domain) form a hexameric chamber, while the N-terminal domain is arranged as a trimer of dimers. DNA and RNA binding is stimulated by substrate and inhibited by ATP binding. Interacts with TWNK and mitochondrial DNA polymerase subunit POLG.

It is found in the mitochondrion matrix. It carries out the reaction Hydrolysis of proteins in presence of ATP.. ATP-dependent serine protease that mediates the selective degradation of misfolded, unassembled or oxidatively damaged polypeptides as well as certain short-lived regulatory proteins in the mitochondrial matrix. Endogenous substrates include mitochondrial steroidogenic acute regulatory (StAR) protein, DELE1, helicase Twinkle (TWNK) and the large ribosomal subunit protein MRPL32/bL32m. MRPL32/bL32m is protected from degradation by LONP1 when it is bound to a nucleic acid (RNA), but TWNK is not. May also have a chaperone function in the assembly of inner membrane protein complexes. Participates in the regulation of mitochondrial gene expression and in the maintenance of the integrity of the mitochondrial genome. Binds to mitochondrial promoters and RNA in a single-stranded, site-specific, and strand-specific manner. May regulate mitochondrial DNA replication and/or gene expression using site-specific, single-stranded DNA binding to target the degradation of regulatory proteins binding to adjacent sites in mitochondrial promoters. This is Lon protease homolog, mitochondrial (Lonp1) from Rattus norvegicus (Rat).